Consider the following 1253-residue polypeptide: Methionine synthase (1253 aa).

The region spanning 6-326 is the Hcy-binding domain; the sequence is QDEIEAILRK…DHIREIAEAV (321 aa). 3 residues coordinate Zn(2+): Cys-248, Cys-311, and Cys-312. The 262-residue stretch at 359-620 folds into the Pterin-binding domain; sequence FVNIGERCNV…IHKDLLQLCE (262 aa). (6S)-5,6,7,8-tetrahydrofolate-binding positions include 370–372, Asp-437, Asn-458, Asp-525, Asn-567, Arg-573, and Arg-579; that span reads GSR. Positions 650 to 747 constitute a B12-binding N-terminal domain; the sequence is QTDEWRNGSI…FMEKEREEAR (98 aa). Methylcob(III)alamin-binding positions include Glu-697, 770-774, His-773, Ser-818, Thr-822, and Ala-874; that span reads GDVHD. A B12-binding domain is found at 760–895; it reads QGTIVLATVK…DENLRDDYFE (136 aa). The AdoMet activation domain occupies 911–1253; it reads SLKERKYVPL…LGPILGYDTD (343 aa). S-adenosyl-L-methionine-binding positions include Asp-962, Arg-1160, and 1215–1216; that span reads YF. A Phosphothreonine modification is found at Thr-1252.

Belongs to the vitamin-B12 dependent methionine synthase family. As to quaternary structure, monomer. Dimer. Forms a multiprotein complex with MMACHC, MMADHC and MTRR. Requires methylcob(III)alamin as cofactor. Zn(2+) is required as a cofactor.

Its subcellular location is the cytoplasm. The enzyme catalyses (6S)-5-methyl-5,6,7,8-tetrahydrofolate + L-homocysteine = (6S)-5,6,7,8-tetrahydrofolate + L-methionine. The protein operates within amino-acid biosynthesis; L-methionine biosynthesis via de novo pathway; L-methionine from L-homocysteine (MetH route): step 1/1. Its function is as follows. Catalyzes the transfer of a methyl group from methylcob(III)alamin (MeCbl) to homocysteine, yielding enzyme-bound cob(I)alamin and methionine in the cytosol. MeCbl is an active form of cobalamin (vitamin B12) used as a cofactor for methionine biosynthesis. Cob(I)alamin form is regenerated to MeCbl by a transfer of a methyl group from 5-methyltetrahydrofolate. The processing of cobalamin in the cytosol occurs in a multiprotein complex composed of at least MMACHC, MMADHC, MTRR (methionine synthase reductase) and MTR which may contribute to shuttle safely and efficiently cobalamin towards MTR in order to produce methionine. The chain is Methionine synthase from Mus musculus (Mouse).